Consider the following 390-residue polypeptide: Magnesium-protoporphyrin IX monomethyl ester [oxidative] cyclase (390 aa).

This sequence belongs to the AcsF family. Fe cation is required as a cofactor.

The catalysed reaction is Mg-protoporphyrin IX 13-monomethyl ester + 3 NADPH + 3 O2 + 2 H(+) = 3,8-divinyl protochlorophyllide a + 3 NADP(+) + 5 H2O. It functions in the pathway porphyrin-containing compound metabolism; chlorophyll biosynthesis (light-independent). Its function is as follows. Catalyzes the formation of the isocyclic ring in chlorophyll biosynthesis. Mediates the cyclase reaction, which results in the formation of divinylprotochlorophyllide (Pchlide) characteristic of all chlorophylls from magnesium-protoporphyrin IX 13-monomethyl ester (MgPMME). This chain is Magnesium-protoporphyrin IX monomethyl ester [oxidative] cyclase, found in Prochlorococcus marinus (strain AS9601).